Reading from the N-terminus, the 194-residue chain is ATP-dependent Clp protease proteolytic subunit (194 aa).

The active-site Nucleophile is the serine 98. Histidine 123 is an active-site residue.

It belongs to the peptidase S14 family. In terms of assembly, fourteen ClpP subunits assemble into 2 heptameric rings which stack back to back to give a disk-like structure with a central cavity, resembling the structure of eukaryotic proteasomes.

It is found in the cytoplasm. The catalysed reaction is Hydrolysis of proteins to small peptides in the presence of ATP and magnesium. alpha-casein is the usual test substrate. In the absence of ATP, only oligopeptides shorter than five residues are hydrolyzed (such as succinyl-Leu-Tyr-|-NHMec, and Leu-Tyr-Leu-|-Tyr-Trp, in which cleavage of the -Tyr-|-Leu- and -Tyr-|-Trp bonds also occurs).. Cleaves peptides in various proteins in a process that requires ATP hydrolysis. Has a chymotrypsin-like activity. Plays a major role in the degradation of misfolded proteins. The polypeptide is ATP-dependent Clp protease proteolytic subunit (Clostridium tetani (strain Massachusetts / E88)).